The sequence spans 179 residues: Inner membrane-spanning protein YciB (179 aa).

5 helical membrane passes run 11-31, 52-69, 71-91, 121-141, and 149-169; these read ILFF…TLII, LIMG…AYFN, LEFL…ILLV, LGWA…SQYL, and FKTF…GVYI.

Belongs to the YciB family.

It is found in the cell inner membrane. Plays a role in cell envelope biogenesis, maintenance of cell envelope integrity and membrane homeostasis. This chain is Inner membrane-spanning protein YciB, found in Histophilus somni (strain 129Pt) (Haemophilus somnus).